Here is a 389-residue protein sequence, read N- to C-terminus: Smad nuclear interacting protein 1 (389 aa).

Over residues 1 to 10 the composition is skewed to basic and acidic residues; the sequence is MKAGKSERER. The segment at 1–212 is disordered; that stretch reads MKAGKSERER…GNKNKEVPVK (212 aa). Phosphoserine is present on serine 18. Residue lysine 28 forms a Glycyl lysine isopeptide (Lys-Gly) (interchain with G-Cter in SUMO); alternate linkage. A Glycyl lysine isopeptide (Lys-Gly) (interchain with G-Cter in SUMO1); alternate cross-link involves residue lysine 28. Lysine 28 is covalently cross-linked (Glycyl lysine isopeptide (Lys-Gly) (interchain with G-Cter in SUMO2); alternate). Positions 28 to 43 are enriched in basic and acidic residues; that stretch reads KQERLSPEPVAHRRPD. Phosphoserine is present on residues serine 33 and serine 48. Residues 54 to 72 are compositionally biased toward low complexity; the sequence is AESGSAGHRGSRARGASRS. Residues 73–95 are compositionally biased toward basic residues; that stretch reads PAKKKSKSSGRRSKSPRTKRSRS. At serine 95 the chain carries Phosphoserine. Composition is skewed to basic and acidic residues over residues 103 to 138 and 147 to 163; these read VKQE…ERDR and RSSD…DRDS. Residue lysine 104 forms a Glycyl lysine isopeptide (Lys-Gly) (interchain with G-Cter in SUMO2) linkage. Position 149 is a phosphoserine (serine 149). Residues 166–197 adopt a coiled-coil conformation; sequence LQAQEEERDFNNARRREHRQQNESAGAEAQEV. Residue lysine 214 forms a Glycyl lysine isopeptide (Lys-Gly) (interchain with G-Cter in SUMO2) linkage. In terms of domain architecture, FHA spans 272–335; the sequence is YLLGRHRRIA…NGTFLNNKRI (64 aa). The segment covering 363–373 has biased composition (basic and acidic residues); it reads ESSDTSELDRK. Positions 363 to 389 are disordered; that stretch reads ESSDTSELDRKEDEDEEEEEEMVSDSS. Acidic residues predominate over residues 374 to 389; it reads EDEDEEEEEEMVSDSS. Serine 386 is subject to Phosphoserine.

Component of activated spliceosome complexes. Component of the minor spliceosome, which splices U12-type introns. Binds SMAD4 and CREBBP/EP300. Binds the SMAD1/OAZ1/PSMB4 complex. Interacts with DROSHA and SMARCA4. Component of the SNARP complex which consists at least of SNIP1, SNW1, THRAP3, BCLAF1 and PNN. Post-translationally, degraded by the proteasome upon binding to the SMAD1/OAZ1/PSMB4 complex.

It is found in the nucleus. Functionally, required for pre-mRNA splicing as component of the spliceosome. As a component of the minor spliceosome, involved in the splicing of U12-type introns in pre-mRNAs. Down-regulates NF-kappa-B signaling by competing with RELA for CREBBP/EP300 binding. Involved in the microRNA (miRNA) biogenesis. May be involved in cyclin-D1/CCND1 mRNA stability through the SNARP complex which associates with both the 3'end of the CCND1 gene and its mRNA. The sequence is that of Smad nuclear interacting protein 1 (Snip1) from Rattus norvegicus (Rat).